The following is a 176-amino-acid chain: ATP-dependent protease subunit HslV (176 aa).

Residue Thr-6 is part of the active site. 3 residues coordinate Na(+): Ser-161, Cys-164, and Thr-167.

The protein belongs to the peptidase T1B family. HslV subfamily. A double ring-shaped homohexamer of HslV is capped on each side by a ring-shaped HslU homohexamer. The assembly of the HslU/HslV complex is dependent on binding of ATP.

It is found in the cytoplasm. It carries out the reaction ATP-dependent cleavage of peptide bonds with broad specificity.. Its activity is regulated as follows. Allosterically activated by HslU binding. Its function is as follows. Protease subunit of a proteasome-like degradation complex believed to be a general protein degrading machinery. This chain is ATP-dependent protease subunit HslV, found in Thermosipho melanesiensis (strain DSM 12029 / CIP 104789 / BI429).